The chain runs to 172 residues: Shikimate kinase (172 aa).

ATP is bound at residue 11 to 16; the sequence is GAGKST. Position 15 (S15) interacts with Mg(2+). The substrate site is built by D33, R57, and G79. R117 serves as a coordination point for ATP. Residue R136 coordinates substrate. R153 lines the ATP pocket.

It belongs to the shikimate kinase family. As to quaternary structure, monomer. Mg(2+) is required as a cofactor.

The protein resides in the cytoplasm. It carries out the reaction shikimate + ATP = 3-phosphoshikimate + ADP + H(+). It functions in the pathway metabolic intermediate biosynthesis; chorismate biosynthesis; chorismate from D-erythrose 4-phosphate and phosphoenolpyruvate: step 5/7. In terms of biological role, catalyzes the specific phosphorylation of the 3-hydroxyl group of shikimic acid using ATP as a cosubstrate. This chain is Shikimate kinase, found in Pseudomonas syringae pv. syringae (strain B728a).